A 115-amino-acid chain; its full sequence is Large ribosomal subunit protein uL18 (115 aa).

The segment at 1 to 29 (MISKPDKNKLRQKRHTRVRGKISGTSETP) is disordered. The segment covering 10 to 20 (LRQKRHTRVRG) has biased composition (basic residues).

It belongs to the universal ribosomal protein uL18 family. As to quaternary structure, part of the 50S ribosomal subunit; part of the 5S rRNA/L5/L18/L25 subcomplex. Contacts the 5S and 23S rRNAs.

Its function is as follows. This is one of the proteins that bind and probably mediate the attachment of the 5S RNA into the large ribosomal subunit, where it forms part of the central protuberance. The polypeptide is Large ribosomal subunit protein uL18 (Lactococcus lactis subsp. lactis (strain IL1403) (Streptococcus lactis)).